Consider the following 488-residue polypeptide: MPGGRRGPSRQQLSRSALPSLQTLVGGGCGNGTGLRNRNGSAIGLPVPPITALITPGPVRHCQIPDLPVDGSLLFEFLFFIYLLVALFIQYINIYKTVWWYPYNHPASCTSLNFHLIDYHLAAFITVMLARRLVWALISEATKAGASSMIHYMVLISARLVLLTLCGWVLCWTLVNLFRSHSVLNLLFLGYPFGVYVPLCCFHQDSRAHLLLTDFPYAVQHQAVEESASTVGGLARSKDFLSLLLESLKEQFNNATPIPTHSCPLSPDLIRNEVECLKADFNHRIKEVLFNSLFSAYYVAFLPLCFVKSTQYYDMRWSCEHLIMVWINAFVMLTTQLLPSKYCDLLHKSAAHLGKWQKLEHGSYSNAPQHIWSENTIWPQGVLVRHSRCLYRAVGPYNVAVPSDVSHARFYFLFHRPLRLLNLLILIEGSVVFYQLYSLLRSEKWNHTLSMALILFCNYYVLFKLLRDRIVLGRAYSYPLNSYELKAN.

2 N-linked (GlcNAc...) asparagine glycosylation sites follow: N31 and N39. 8 consecutive transmembrane segments (helical) span residues 72–92, 110–130, 154–174, 182–202, 287–307, 319–339, 420–440, and 446–466; these read SLLF…IQYI, TSLN…VMLA, VLIS…CWTL, SVLN…LCCF, EVLF…LCFV, CEHL…QLLP, LLNL…YSLL, and NHTL…FKLL.

Belongs to the TMEM39 family. As to quaternary structure, interacts with SACM1L, SEC23A and SEC24A.

It is found in the endoplasmic reticulum membrane. Its function is as follows. Regulates autophagy by controlling the spatial distribution and levels of the intracellular phosphatidylinositol 4-phosphate (PtdIns(4)P) pools. Modulates (PtdIns(4)P) levels by regulating the ER-to-Golgi trafficking of the phosphatidylinositide phosphatase SACM1L. The sequence is that of Transmembrane protein 39A (TMEM39A) from Bos taurus (Bovine).